The following is a 210-amino-acid chain: Guanylate kinase (210 aa).

One can recognise a Guanylate kinase-like domain in the interval 23–203 (GRVVVLSGPS…ACAELVSLLV (181 aa)). 30 to 37 (GPSAVGKS) contributes to the ATP binding site.

The protein belongs to the guanylate kinase family.

The protein localises to the cytoplasm. The catalysed reaction is GMP + ATP = GDP + ADP. In terms of biological role, essential for recycling GMP and indirectly, cGMP. This Mycobacterium leprae (strain TN) protein is Guanylate kinase (gmk).